Consider the following 157-residue polypeptide: 2-C-methyl-D-erythritol 2,4-cyclodiphosphate synthase (157 aa).

Positions 8 and 10 each coordinate a divalent metal cation. 4-CDP-2-C-methyl-D-erythritol 2-phosphate-binding positions include 8-10 (DVH) and 34-35 (HS). His-42 is an a divalent metal cation binding site. 4-CDP-2-C-methyl-D-erythritol 2-phosphate contacts are provided by residues 56–58 (DIG), 132–135 (TTNE), and Arg-142.

The protein belongs to the IspF family. Homotrimer. The cofactor is a divalent metal cation.

It catalyses the reaction 4-CDP-2-C-methyl-D-erythritol 2-phosphate = 2-C-methyl-D-erythritol 2,4-cyclic diphosphate + CMP. It participates in isoprenoid biosynthesis; isopentenyl diphosphate biosynthesis via DXP pathway; isopentenyl diphosphate from 1-deoxy-D-xylulose 5-phosphate: step 4/6. In terms of biological role, involved in the biosynthesis of isopentenyl diphosphate (IPP) and dimethylallyl diphosphate (DMAPP), two major building blocks of isoprenoid compounds. Catalyzes the conversion of 4-diphosphocytidyl-2-C-methyl-D-erythritol 2-phosphate (CDP-ME2P) to 2-C-methyl-D-erythritol 2,4-cyclodiphosphate (ME-CPP) with a corresponding release of cytidine 5-monophosphate (CMP). In Chlorobium phaeovibrioides (strain DSM 265 / 1930) (Prosthecochloris vibrioformis (strain DSM 265)), this protein is 2-C-methyl-D-erythritol 2,4-cyclodiphosphate synthase.